The sequence spans 76 residues: uncharacterized protein (76 aa).

Residues 15 to 69 (VRIVRKEQNLRQDELAGVAGVGLRFIVDLEAGKPTAQIGKVLQVLQTLGCSIDIL) enclose the HTH cro/C1-type domain. The segment at residues 26-45 (QDELAGVAGVGLRFIVDLEA) is a DNA-binding region (H-T-H motif).

This is an uncharacterized protein from Sinorhizobium fredii (strain NBRC 101917 / NGR234).